Here is a 575-residue protein sequence, read N- to C-terminus: Proline--tRNA ligase (575 aa).

This sequence belongs to the class-II aminoacyl-tRNA synthetase family. ProS type 1 subfamily. In terms of assembly, homodimer.

It localises to the cytoplasm. The enzyme catalyses tRNA(Pro) + L-proline + ATP = L-prolyl-tRNA(Pro) + AMP + diphosphate. Catalyzes the attachment of proline to tRNA(Pro) in a two-step reaction: proline is first activated by ATP to form Pro-AMP and then transferred to the acceptor end of tRNA(Pro). As ProRS can inadvertently accommodate and process non-cognate amino acids such as alanine and cysteine, to avoid such errors it has two additional distinct editing activities against alanine. One activity is designated as 'pretransfer' editing and involves the tRNA(Pro)-independent hydrolysis of activated Ala-AMP. The other activity is designated 'posttransfer' editing and involves deacylation of mischarged Ala-tRNA(Pro). The misacylated Cys-tRNA(Pro) is not edited by ProRS. This is Proline--tRNA ligase from Desulfitobacterium hafniense (strain DSM 10664 / DCB-2).